A 128-amino-acid chain; its full sequence is MAKPRRTGKKERKNIPVGVAHIQATFNNTIVTFTDQKGNVVSWATSGGAGFKGSRKSTPFAAQVAAENAARKAQENGMRTVGVLVKGPGSGREAAMRAIHNAGFKISYIRDITPIPHNGCRPPKRRRV.

Belongs to the universal ribosomal protein uS11 family. As to quaternary structure, part of the 30S ribosomal subunit. Interacts with proteins S7 and S18. Binds to IF-3.

Functionally, located on the platform of the 30S subunit, it bridges several disparate RNA helices of the 16S rRNA. Forms part of the Shine-Dalgarno cleft in the 70S ribosome. The chain is Small ribosomal subunit protein uS11 from Solidesulfovibrio magneticus (strain ATCC 700980 / DSM 13731 / RS-1) (Desulfovibrio magneticus).